The primary structure comprises 341 residues: GTPase Obg (341 aa).

An Obg domain is found at Met-1–Leu-159. Residues Thr-128–Arg-150 form a disordered region. The span at Arg-129–Gly-144 shows a compositional bias: polar residues. The OBG-type G domain occupies Ala-160 to Asp-334. GTP-binding positions include Gly-166–Ser-173, Phe-191–His-195, Asp-213–Gly-216, Asn-283–Asp-286, and Ser-315–Ile-317. The Mg(2+) site is built by Ser-173 and Thr-193.

Belongs to the TRAFAC class OBG-HflX-like GTPase superfamily. OBG GTPase family. As to quaternary structure, monomer. It depends on Mg(2+) as a cofactor.

It localises to the cytoplasm. In terms of biological role, an essential GTPase which binds GTP, GDP and possibly (p)ppGpp with moderate affinity, with high nucleotide exchange rates and a fairly low GTP hydrolysis rate. Plays a role in control of the cell cycle, stress response, ribosome biogenesis and in those bacteria that undergo differentiation, in morphogenesis control. This Legionella pneumophila (strain Lens) protein is GTPase Obg.